The primary structure comprises 156 residues: S-ribosylhomocysteine lyase (156 aa).

Fe cation contacts are provided by H54, H58, and C126.

The protein belongs to the LuxS family. As to quaternary structure, homodimer. It depends on Fe cation as a cofactor.

The catalysed reaction is S-(5-deoxy-D-ribos-5-yl)-L-homocysteine = (S)-4,5-dihydroxypentane-2,3-dione + L-homocysteine. Functionally, involved in the synthesis of autoinducer 2 (AI-2) which is secreted by bacteria and is used to communicate both the cell density and the metabolic potential of the environment. The regulation of gene expression in response to changes in cell density is called quorum sensing. Catalyzes the transformation of S-ribosylhomocysteine (RHC) to homocysteine (HC) and 4,5-dihydroxy-2,3-pentadione (DPD). This chain is S-ribosylhomocysteine lyase, found in Shouchella clausii (strain KSM-K16) (Alkalihalobacillus clausii).